The following is a 74-amino-acid chain: Protein YkgV (74 aa).

This chain is Protein YkgV, found in Escherichia coli (strain K12).